Here is a 670-residue protein sequence, read N- to C-terminus: Probable ATP-citrate synthase subunit 1 (670 aa).

Positions 1–22 are disordered; that stretch reads MPSATTASTNGANGASASPAPG. Residues 257-277 and 308-334 contribute to the ATP site; these read LLRY…EVGG and FKTE…KNKS. Residue E274 coordinates Mg(2+). Residue H316 is the Tele-phosphohistidine intermediate of the active site. Residue 335-345 participates in CoA binding; that stretch reads MREAGFYVPDT.

This sequence belongs to the succinate/malate CoA ligase alpha subunit family. As to quaternary structure, composed of two subunits.

It localises to the cytoplasm. The catalysed reaction is oxaloacetate + acetyl-CoA + ADP + phosphate = citrate + ATP + CoA. In terms of biological role, catalyzes the formation of cytosolic acetyl-CoA, which is mainly used for the biosynthesis of fatty acids and sterols. The polypeptide is Probable ATP-citrate synthase subunit 1 (Neurospora crassa (strain ATCC 24698 / 74-OR23-1A / CBS 708.71 / DSM 1257 / FGSC 987)).